We begin with the raw amino-acid sequence, 147 residues long: Large ribosomal subunit protein uL15 (147 aa).

The interval 1 to 57 (MRLEDLRPTPGSMKKRKRVGRGPGSGHGKTSGRGHKGQKARGTGKVHPWFEGGQTPL) is disordered. Residues 30 to 44 (TSGRGHKGQKARGTG) are compositionally biased toward basic residues.

This sequence belongs to the universal ribosomal protein uL15 family. As to quaternary structure, part of the 50S ribosomal subunit.

In terms of biological role, binds to the 23S rRNA. This Thermotoga neapolitana (strain ATCC 49049 / DSM 4359 / NBRC 107923 / NS-E) protein is Large ribosomal subunit protein uL15.